A 22-amino-acid chain; its full sequence is Large ribosomal subunit protein bL32 (22 aa).

The disordered stretch occupies residues 1 to 22 (CVPKRKVSPSXRNMRXAHDXLT).

The protein belongs to the bacterial ribosomal protein bL32 family.

The polypeptide is Large ribosomal subunit protein bL32 (rpmF) (Brevundimonas vesicularis (Pseudomonas vesicularis)).